Reading from the N-terminus, the 90-residue chain is Small ribosomal subunit protein bS18 (90 aa).

It belongs to the bacterial ribosomal protein bS18 family. As to quaternary structure, part of the 30S ribosomal subunit. Forms a tight heterodimer with protein bS6.

Functionally, binds as a heterodimer with protein bS6 to the central domain of the 16S rRNA, where it helps stabilize the platform of the 30S subunit. This Bordetella avium (strain 197N) protein is Small ribosomal subunit protein bS18.